The chain runs to 298 residues: Lipoyl synthase (298 aa).

Positions 40, 45, 51, 67, 71, 74, and 280 each coordinate [4Fe-4S] cluster. Residues 53–269 (AVRRTATFMI…KEIALSKGFS (217 aa)) enclose the Radical SAM core domain.

Belongs to the radical SAM superfamily. Lipoyl synthase family. Requires [4Fe-4S] cluster as cofactor.

It is found in the cytoplasm. It carries out the reaction [[Fe-S] cluster scaffold protein carrying a second [4Fe-4S](2+) cluster] + N(6)-octanoyl-L-lysyl-[protein] + 2 oxidized [2Fe-2S]-[ferredoxin] + 2 S-adenosyl-L-methionine + 4 H(+) = [[Fe-S] cluster scaffold protein] + N(6)-[(R)-dihydrolipoyl]-L-lysyl-[protein] + 4 Fe(3+) + 2 hydrogen sulfide + 2 5'-deoxyadenosine + 2 L-methionine + 2 reduced [2Fe-2S]-[ferredoxin]. It functions in the pathway protein modification; protein lipoylation via endogenous pathway; protein N(6)-(lipoyl)lysine from octanoyl-[acyl-carrier-protein]. Catalyzes the radical-mediated insertion of two sulfur atoms into the C-6 and C-8 positions of the octanoyl moiety bound to the lipoyl domains of lipoate-dependent enzymes, thereby converting the octanoylated domains into lipoylated derivatives. In Geobacillus kaustophilus (strain HTA426), this protein is Lipoyl synthase.